A 91-amino-acid polypeptide reads, in one-letter code: Small ribosomal subunit protein bS18 (91 aa).

It belongs to the bacterial ribosomal protein bS18 family. As to quaternary structure, part of the 30S ribosomal subunit. Forms a tight heterodimer with protein bS6.

Its function is as follows. Binds as a heterodimer with protein bS6 to the central domain of the 16S rRNA, where it helps stabilize the platform of the 30S subunit. The protein is Small ribosomal subunit protein bS18 of Wolbachia pipientis wMel.